Reading from the N-terminus, the 901-residue chain is Phosphatidylinositol 3-kinase catalytic subunit type 3 (901 aa).

A C2 PI3K-type domain is found at 21-189; that stretch reads LQTNVQVKVA…DLLFKQVTRQ (169 aa). The 226-residue stretch at 302-527 folds into the PIK helical domain; it reads RHRQVKPNKQ…SKMYQNIQDR (226 aa). The region spanning 607 to 886 is the PI3K/PI4K catalytic domain; sequence IPDTASFFKS…QIESSLNAKM (280 aa). Residues 613–619 are G-loop; sequence FFKSEMM. Positions 755 to 763 are catalytic loop; that stretch reads GLGDRHLDN. Residues 774-795 form an activation loop region; the sequence is HVDFGFILGRDPKPMPPPMKLT.

The protein belongs to the PI3/PI4-kinase family. In terms of assembly, interacts with bec-1. May interact with dyn-1. Mn(2+) is required as a cofactor. In terms of tissue distribution, ubiquitous.

The protein localises to the nucleus outer membrane. It localises to the cytoplasm. The protein resides in the cytoplasmic granule. Its subcellular location is the cell projection. It is found in the phagocytic cup. The catalysed reaction is a 1,2-diacyl-sn-glycero-3-phospho-(1D-myo-inositol) + ATP = a 1,2-diacyl-sn-glycero-3-phospho-(1D-myo-inositol-3-phosphate) + ADP + H(+). Its activity is regulated as follows. Inhibited by wortmannin. In terms of biological role, catalytic subunit of the PI3K complex that mediates formation of phosphatidylinositol 3-phosphate. Together with bec-1, mediates the production of phosphatidylinositol 3-phosphate on intracellular vesicles and thereby regulates membrane trafficking. Plays a role in endosome-to-Golgi retrograde transport of mig-14. Involved in clearance of apoptotic cell corpses by phagosomes. Phagosome maturation requires two sequential and non-overlapping pulses of phosphatidylinositol-3-phosphate (PI3P) on the vesicle surface which mediates recruitment of sortins snx-1 and lst-4 and small GTPases rab-5, rab-2 and rab-7, downstream of dynamin dyn-1. The first pulse is initiated by piki-1, then maintained by vps-34 which also produces the second pulse. Required for embryonic development. Together with bec-1, involved in L3/L4 larval molting stage probably by regulating cuticle shedding. Regulates the expansion of the nucleus outer membrane. Involved in the secretion and localization of lrp-1 at the apical surface of hyp7 syncytium. May regulate endocytosis in hypodermal cells. May play a role in the formation of gut granules (a lysosome-related organelle). Plays a role in germ stem cell proliferation during larval development. The protein is Phosphatidylinositol 3-kinase catalytic subunit type 3 of Caenorhabditis elegans.